A 338-amino-acid chain; its full sequence is D-erythrose-4-phosphate dehydrogenase (338 aa).

An NAD(+)-binding site is contributed by 11–12; that stretch reads RI. Residues 153 to 155, R199, 212 to 213, and R235 each bind substrate; these read SCT and TK. The active-site Nucleophile is the C154. Position 317 (N317) interacts with NAD(+).

Belongs to the glyceraldehyde-3-phosphate dehydrogenase family. Epd subfamily. As to quaternary structure, homotetramer.

Its subcellular location is the cytoplasm. The catalysed reaction is D-erythrose 4-phosphate + NAD(+) + H2O = 4-phospho-D-erythronate + NADH + 2 H(+). Its pathway is cofactor biosynthesis; pyridoxine 5'-phosphate biosynthesis; pyridoxine 5'-phosphate from D-erythrose 4-phosphate: step 1/5. In terms of biological role, catalyzes the NAD-dependent conversion of D-erythrose 4-phosphate to 4-phosphoerythronate. The protein is D-erythrose-4-phosphate dehydrogenase of Shewanella amazonensis (strain ATCC BAA-1098 / SB2B).